Consider the following 77-residue polypeptide: Coiled-coil-helix-coiled-coil-helix domain-containing protein C550.01c (77 aa).

Residues Lys24–Leu65 form the CHCH domain. 2 short sequence motifs (cx9C motif) span residues Cys27–Cys37 and Cys47–Cys57. 2 disulfide bridges follow: Cys27/Cys57 and Cys37/Cys47.

The protein localises to the cytoplasm. It is found in the nucleus. The chain is Coiled-coil-helix-coiled-coil-helix domain-containing protein C550.01c from Schizosaccharomyces pombe (strain 972 / ATCC 24843) (Fission yeast).